Reading from the N-terminus, the 405-residue chain is CMP-sialic acid transporter 4 (405 aa).

Residues 1 to 43 lie on the Cytoplasmic side of the membrane; that stretch reads MQRNGVMECSVCHSKVVAPSPRSVSRAYDKHRSKISSKYRALN. The chain crosses the membrane as a helical span at residues 44–64; it reads FLLVSGDCILVGLQPILVFMS. Residues 65–74 lie on the Lumenal side of the membrane; it reads KVDGKFQFSP. A helical transmembrane segment spans residues 75-95; the sequence is ISVNFLTEVTKVIFAIVMLII. Residues 96–121 lie on the Cytoplasmic side of the membrane; the sequence is QSRKQKVGEKPLLSLSTFVQAARNNA. A helical membrane pass occupies residues 122-142; that stretch reads LLAVPALLYAINNYLKFIMQL. Tyrosine 143 is a topological domain (lumenal). Residues 144–164 form a helical membrane-spanning segment; it reads FSPATVKMLSNLKVLVIAILL. At 165-171 the chain is on the cytoplasmic side; the sequence is KFIMRRK. Residues 172 to 192 traverse the membrane as a helical segment; that stretch reads FSIIQWEALALLLIGISVNQL. Residues 193–203 lie on the Lumenal side of the membrane; it reads SSIPDGTKSFG. The helical transmembrane segment at 204-224 threads the bilayer; the sequence is LAVTTIAYIYTLIFVTVPSLA. Residues 225–244 are Cytoplasmic-facing; it reads SVYNEYALKSQFDTSIYLQN. Residues 245 to 265 form a helical membrane-spanning segment; sequence LFLYGYGAIFNFLGILGTVIF. The Lumenal portion of the chain corresponds to 266–281; the sequence is QGPESFDILQGHSRAT. A helical transmembrane segment spans residues 282-302; sequence MFLICNNAAQGILSSFFFKYA. Over 303–322 the chain is Cytoplasmic; the sequence is DTILKKYSSTVATIFTGLAS. Residues 323 to 343 form a helical membrane-spanning segment; it reads AAFLGHTLTVNFLLGISIVFI. Topologically, residues 344–405 are lumenal; it reads SMHQFFSPLA…TDERKPLLPI (62 aa). The disordered stretch occupies residues 386-405; the sequence is AADDASHLTSTDERKPLLPI. Residues 389 to 405 show a composition bias toward basic and acidic residues; the sequence is DASHLTSTDERKPLLPI.

Belongs to the nucleotide-sugar transporter family. CMP-Sialate:CMP antiporter (TC 2.A.7.12) subfamily.

The protein resides in the golgi apparatus membrane. Sugar transporter involved in the transport of CMP-sialic acid from the cytoplasm into the Golgi. May transport important nucleotide sugars such as CMP-Kdo (2-keto-3-deoxy-D-manno-octulosonic acid) in physiological conditions. The sequence is that of CMP-sialic acid transporter 4 from Oryza sativa subsp. indica (Rice).